The sequence spans 1483 residues: Heme-responsive zinc finger transcription factor HAP1 (1483 aa).

Residues 1–50 (MSNTPYNSSVPSIASMTQSSVSRSPNMHTATTPGANTSSNSPPLHMSSDS) show a composition bias toward polar residues. The disordered stretch occupies residues 1-56 (MSNTPYNSSVPSIASMTQSSVSRSPNMHTATTPGANTSSNSPPLHMSSDSSKIKRK). Zn(2+)-binding residues include cysteine 64, cysteine 67, cysteine 74, cysteine 81, cysteine 84, and cysteine 93. A DNA-binding region (zn(2)-C6 fungal-type) is located at residues 64 to 93 (CTICRKRKVKCDKLRPHCQQCTKTGVAHLC). The stretch at 105–134 (EKELLKDNELKKLRERVKSLEKTLSKVHSS) forms a coiled coil. Positions 162 to 176 (VNANTGSASSASHMH) are enriched in polar residues. The interval 162–208 (VNANTGSASSASHMHQQQQQQQQQEQQQDFSRSANANANSSSLSISN) is disordered. Residues 177–208 (QQQQQQQQQEQQQDFSRSANANANSSSLSISN) show a composition bias toward low complexity. The tract at residues 244 to 444 (KGDPYLKLLW…NTIPHHQPQS (201 aa)) is heme-responsive; required for HMC formation. HRM repeat units follow at residues 280-285 (KCPINH), 299-304 (KCPVDH), 323-328 (KCPVDH), 347-352 (RCPVDH), 389-394 (KCPVDH), and 415-420 (RCPIDH). Polar residues-rich tracts occupy residues 432 to 447 (STHNTIPHHQPQSGSH) and 706 to 734 (QLNATIPATSQDVSNNGSKKANPSTNPTL). Disordered stretches follow at residues 432 to 458 (STHNTIPHHQPQSGSHARSHPAQNRKH) and 706 to 767 (QLNA…KENQ). The span at 735–759 (NNNMSAATTNSSSRSGSADSRSGSN) shows a compositional bias: low complexity. The stretch at 1192-1197 (KCPVYQ) is one HRM 7 repeat. Disordered regions lie at residues 1266 to 1289 (DGYIDNNSNNDIPRGISPKPSNGL) and 1386 to 1411 (NTDTSANGSALSTLTSPQGSDLASNS). Over residues 1388–1411 (DTSANGSALSTLTSPQGSDLASNS) the composition is skewed to polar residues.

In terms of assembly, binds DNA as a homodimer. Interacts with SRO9 and YDJ1. In the absence of heme, binds to at least four cellular proteins, including YDJ1 and SRO9, forming a high-molecular-weight complex (HMC) which results in repression of its activity and dictates its DNA-binding specificity.

The protein resides in the nucleus. Its function is as follows. Regulation of oxygen dependent gene expression. It modulates the expression of Iso-1 (CYP1) and Iso-2 (CYP3) cytochrome c. In response to heme, promotes transcription of genes encoding functions required for respiration, controlling oxidative damage and repression of anaerobic genes. Binds to the sequence 5'-CGGNNNTNNCGG-3'. This is Heme-responsive zinc finger transcription factor HAP1 (HAP1) from Saccharomyces cerevisiae (strain JAY291) (Baker's yeast).